We begin with the raw amino-acid sequence, 362 residues long: tRNA-specific 2-thiouridylase MnmA 1 (362 aa).

Residues 12–19 (GMSGGVDS) and Met-38 each bind ATP. Residue Cys-104 is the Nucleophile of the active site. A disulfide bridge connects residues Cys-104 and Cys-200. Position 128 (Gly-128) interacts with ATP. Positions 150 to 152 (KDQ) are interaction with tRNA. Cys-200 serves as the catalytic Cysteine persulfide intermediate. Residues 306–307 (RY) are interaction with tRNA.

This sequence belongs to the MnmA/TRMU family.

The protein localises to the cytoplasm. The catalysed reaction is S-sulfanyl-L-cysteinyl-[protein] + uridine(34) in tRNA + AH2 + ATP = 2-thiouridine(34) in tRNA + L-cysteinyl-[protein] + A + AMP + diphosphate + H(+). Its function is as follows. Catalyzes the 2-thiolation of uridine at the wobble position (U34) of tRNA, leading to the formation of s(2)U34. The chain is tRNA-specific 2-thiouridylase MnmA 1 from Clostridium tetani (strain Massachusetts / E88).